The chain runs to 142 residues: Large ribosomal subunit protein uL13 (142 aa).

Belongs to the universal ribosomal protein uL13 family. In terms of assembly, part of the 50S ribosomal subunit.

In terms of biological role, this protein is one of the early assembly proteins of the 50S ribosomal subunit, although it is not seen to bind rRNA by itself. It is important during the early stages of 50S assembly. The polypeptide is Large ribosomal subunit protein uL13 (Acinetobacter baumannii (strain AB0057)).